Here is a 452-residue protein sequence, read N- to C-terminus: Isocitrate dehydrogenase [NADP], mitochondrial (452 aa).

Residues 1 to 39 constitute a mitochondrion transit peptide; sequence MAGYLRVVRSLCRASGSRPAWAPAALTAPTSQEQTRRHY. 4 positions are modified to N6-acetyllysine: Lys-45, Lys-48, Lys-67, and Lys-69. N6-acetyllysine; alternate is present on residues Lys-80 and Lys-106. An N6-succinyllysine; alternate mark is found at Lys-80 and Lys-106. Residues 115–117 and Arg-122 each bind NADP(+); that span reads TIT. Thr-117 provides a ligand contact to substrate. Substrate-binding positions include 134 to 140 and Arg-149; that span reads SPNGTIR. Lys-155 carries the post-translational modification N6-acetyllysine. Position 166 is an N6-acetyllysine; alternate (Lys-166). Position 166 is an N6-succinyllysine; alternate (Lys-166). Residue Arg-172 coordinates substrate. N6-acetyllysine; alternate is present on residues Lys-180 and Lys-193. N6-succinyllysine; alternate occurs at positions 180 and 193. Residue Lys-199 is modified to N6-acetyllysine. Residue Lys-256 is modified to N6-acetyllysine; alternate. Residue Lys-256 is modified to N6-succinyllysine; alternate. N6-acetyllysine occurs at positions 263, 272, 275, and 280. N6-acetyllysine; alternate is present on Lys-282. An N6-succinyllysine; alternate modification is found at Lys-282. Mn(2+) is bound at residue Asp-291. Position 299 (Lys-299) interacts with NADP(+). Asp-314 is a Mn(2+) binding site. NADP(+) is bound by residues 349–354 and Asn-367; that span reads GTVTRH. At Lys-384 the chain carries N6-acetyllysine; alternate. N6-succinyllysine; alternate is present on Lys-384. 3 positions are modified to N6-acetyllysine: Lys-400, Lys-413, and Lys-442.

The protein belongs to the isocitrate and isopropylmalate dehydrogenases family. As to quaternary structure, homodimer. Mg(2+) serves as cofactor. Mn(2+) is required as a cofactor. In terms of processing, acetylation at Lys-413 dramatically reduces catalytic activity. Deacetylated by SIRT3.

It is found in the mitochondrion. The catalysed reaction is D-threo-isocitrate + NADP(+) = 2-oxoglutarate + CO2 + NADPH. Plays a role in intermediary metabolism and energy production. It may tightly associate or interact with the pyruvate dehydrogenase complex. The sequence is that of Isocitrate dehydrogenase [NADP], mitochondrial (IDH2) from Macaca fascicularis (Crab-eating macaque).